The following is a 504-amino-acid chain: Glycerol kinase (504 aa).

ADP is bound at residue T16. ATP-binding residues include T16 and T17. T16 lines the sn-glycerol 3-phosphate pocket. Residue R20 coordinates ADP. Residues R86, E87, Y138, and D247 each coordinate sn-glycerol 3-phosphate. Residues R86, E87, Y138, D247, and Q248 each contribute to the glycerol site. 2 residues coordinate ADP: T269 and G316. Residues T269, G316, Q320, and G417 each coordinate ATP. 2 residues coordinate ADP: G417 and N421.

Belongs to the FGGY kinase family.

The enzyme catalyses glycerol + ATP = sn-glycerol 3-phosphate + ADP + H(+). It participates in polyol metabolism; glycerol degradation via glycerol kinase pathway; sn-glycerol 3-phosphate from glycerol: step 1/1. With respect to regulation, inhibited by fructose 1,6-bisphosphate (FBP). In terms of biological role, key enzyme in the regulation of glycerol uptake and metabolism. Catalyzes the phosphorylation of glycerol to yield sn-glycerol 3-phosphate. The polypeptide is Glycerol kinase (Trichodesmium erythraeum (strain IMS101)).